Consider the following 991-residue polypeptide: Translation initiation factor IF-2 (991 aa).

Disordered regions lie at residues 126–220 and 325–359; these read QADH…DVGE and VKAA…VDEK. Composition is skewed to polar residues over residues 138 to 160 and 201 to 210; these read QTES…TEPA and PAAQTESAVQ. Positions 326–340 are enriched in low complexity; it reads KAAGDGDTAPAADDA. Basic residues predominate over residues 343–353; it reads GKKKPGKKKKK. The tr-type G domain maps to 488–658; it reads IRPPVVTIMG…LTEAEIRELK (171 aa). The interval 497–504 is G1; it reads GHVDHGKT. GTP is bound at residue 497 to 504; sequence GHVDHGKT. The interval 522-526 is G2; it reads GITQH. The segment at 544 to 547 is G3; sequence DTPG. GTP-binding positions include 544 to 548 and 598 to 601; these read DTPGH and NKID. Residues 598–601 form a G4 region; it reads NKID. The segment at 634-636 is G5; it reads SAK.

This sequence belongs to the TRAFAC class translation factor GTPase superfamily. Classic translation factor GTPase family. IF-2 subfamily.

The protein localises to the cytoplasm. In terms of biological role, one of the essential components for the initiation of protein synthesis. Protects formylmethionyl-tRNA from spontaneous hydrolysis and promotes its binding to the 30S ribosomal subunits. Also involved in the hydrolysis of GTP during the formation of the 70S ribosomal complex. The protein is Translation initiation factor IF-2 of Chlorobium phaeobacteroides (strain DSM 266 / SMG 266 / 2430).